The sequence spans 87 residues: Large ribosomal subunit protein bL27 (87 aa).

The protein belongs to the bacterial ribosomal protein bL27 family.

The sequence is that of Large ribosomal subunit protein bL27 from Paenarthrobacter aurescens (strain TC1).